Here is a 259-residue protein sequence, read N- to C-terminus: Thrombin-like enzyme gyroxin B1.7 (259 aa).

Positions 1-18 are cleaved as a signal peptide; that stretch reads MVLIRVLANLLILQLSYA. The propeptide occupies 19 to 259; that stretch reads QKSSELVIGG…AGNTAVTCPP (241 aa). The Peptidase S1 domain maps to 25–250; it reads VIGGDECNIN…DTEWIQSIIA (226 aa). 5 disulfides stabilise this stretch: cysteine 31-cysteine 162, cysteine 49-cysteine 65, cysteine 141-cysteine 211, cysteine 173-cysteine 190, and cysteine 201-cysteine 226. The active-site Charge relay system is the histidine 64. Asparagine 102 carries N-linked (GlcNAc...) asparagine glycosylation. The active-site Charge relay system is aspartate 109. The active-site Charge relay system is serine 205.

It belongs to the peptidase S1 family. Snake venom subfamily. In terms of assembly, monomer. Expressed by the venom gland.

It localises to the secreted. Thrombin-like snake venom serine protease. Displays a specificity similar to trypsin. Releases only fibrinopeptide A in the conversion of fibrinogen to fibrin. Shows coagulant, esterase and amidase activities. Reversibly increases the permeability of the blood brain barrier (BBB) in mice. Induces the barrel rotation syndrome in mice, which is manifested by gyroxin-like, rapid rolling motions. This syndrome may be due to its effect on BBB permeability, and certainly also to other actions affecting endogenous substrates present in the endothelium, nervous tissues or blood. The polypeptide is Thrombin-like enzyme gyroxin B1.7 (Crotalus durissus terrificus (South American rattlesnake)).